Here is a 185-residue protein sequence, read N- to C-terminus: Ribosome-recycling factor (185 aa).

Belongs to the RRF family.

It localises to the cytoplasm. Responsible for the release of ribosomes from messenger RNA at the termination of protein biosynthesis. May increase the efficiency of translation by recycling ribosomes from one round of translation to another. The protein is Ribosome-recycling factor of Buchnera aphidicola subsp. Acyrthosiphon pisum (strain 5A).